A 1234-amino-acid chain; its full sequence is ATP-dependent helicase/nuclease subunit A (1234 aa).

The UvrD-like helicase ATP-binding domain maps to 9-482; that stretch reads STWTDDQWEA…IDLNKNFRSR (474 aa). Residue 30 to 37 coordinates ATP; sequence AAAGSGKT. The region spanning 509–800 is the UvrD-like helicase C-terminal domain; the sequence is QAELKLGASY…RMMTIHSSKG (292 aa).

It belongs to the helicase family. AddA subfamily. Heterodimer of AddA and AddB/RexB. Mg(2+) serves as cofactor.

The catalysed reaction is Couples ATP hydrolysis with the unwinding of duplex DNA by translocating in the 3'-5' direction.. The enzyme catalyses ATP + H2O = ADP + phosphate + H(+). Functionally, the heterodimer acts as both an ATP-dependent DNA helicase and an ATP-dependent, dual-direction single-stranded exonuclease. Recognizes the chi site generating a DNA molecule suitable for the initiation of homologous recombination. The AddA nuclease domain is required for chi fragment generation; this subunit has the helicase and 3' -&gt; 5' nuclease activities. The chain is ATP-dependent helicase/nuclease subunit A from Bacillus pumilus (strain SAFR-032).